Consider the following 639-residue polypeptide: Protein argonaute (639 aa).

The interval 1-100 (MYLNLYKIDI…YIKKLFLDND (100 aa)) is N-terminal domain. The linker L1 stretch occupies residues 101-153 (FYFKKGNNFISNSEVFSLDSNENVNAHLTYKIKIHNISNEYYLSILPKFTFLS). Residues 154-209 (KEPALESAIKSGYLYNIKSGKSFPYISGLDGILKIDIGNNQIVEVAYPENYLFNFT) form a PAZ domain region. Positions 210 to 292 (TRDAEKYGFS…KYSFYKNEQP (83 aa)) are linker L2. The segment at 293–424 (LKAIFFFSSK…YVYKMGNFIP (132 aa)) is mid domain. The PIWI domain stretch occupies residues 425 to 639 (ECKPFILKKM…DYEWKLYIPY (215 aa)). Catalysis depends on residues aspartate 446, glutamate 482, aspartate 516, and asparagine 624. A Mn(2+)-binding site is contributed by aspartate 446. The Mn(2+) site is built by aspartate 516 and asparagine 624.

Belongs to the argonaute family. Long pAgo subfamily. The cofactor is Mn(2+).

It is found in the cytoplasm. An RNA-guided ssDNA endonuclease that may play a role in defense against invading mobile genetic elements. Uses short 5'-OH-ssRNA sequences as guides (gRNA) to bind complementary target DNA (tDNA) or target RNA resulting in target cleavage. The cleavage site is 10 nucleotides (nt) downstream of the target residue base-paired with the 5'-end of the gRNA. Reaction rates are fastest on 5'-OH-gRNA:tDNA followed by 5'-OH-gRNA:target RNA. gRNA between 17-21 nt supports equivalent rates of cleavage, has no preferred 5'-nt. Has weak activity on tDNA with 5'-phospho-gRNA, yielding products 1-2 nt longer. Unlike other characterized prokaryotic Ago proteins symmetric mismatches centered around the cleavage site reduce cleavage efficiency. This Marinitoga piezophila (strain DSM 14283 / JCM 11233 / KA3) protein is Protein argonaute.